We begin with the raw amino-acid sequence, 428 residues long: Serine--tRNA ligase (428 aa).

234–236 (TAE) is an L-serine binding site. 265–267 (RRE) contributes to the ATP binding site. Residue glutamate 288 coordinates L-serine. 352–355 (EISS) serves as a coordination point for ATP. Serine 388 lines the L-serine pocket.

Belongs to the class-II aminoacyl-tRNA synthetase family. Type-1 seryl-tRNA synthetase subfamily. Homodimer. The tRNA molecule binds across the dimer.

It localises to the cytoplasm. The enzyme catalyses tRNA(Ser) + L-serine + ATP = L-seryl-tRNA(Ser) + AMP + diphosphate + H(+). It catalyses the reaction tRNA(Sec) + L-serine + ATP = L-seryl-tRNA(Sec) + AMP + diphosphate + H(+). It participates in aminoacyl-tRNA biosynthesis; selenocysteinyl-tRNA(Sec) biosynthesis; L-seryl-tRNA(Sec) from L-serine and tRNA(Sec): step 1/1. Catalyzes the attachment of serine to tRNA(Ser). Is also able to aminoacylate tRNA(Sec) with serine, to form the misacylated tRNA L-seryl-tRNA(Sec), which will be further converted into selenocysteinyl-tRNA(Sec). The chain is Serine--tRNA ligase from Synechococcus elongatus (strain ATCC 33912 / PCC 7942 / FACHB-805) (Anacystis nidulans R2).